We begin with the raw amino-acid sequence, 271 residues long: Dipeptidyl-peptidase 6 (271 aa).

SH3b domains lie at 1 to 64 (MNAI…LFDD) and 72 to 140 (QKAQ…HPKI). A NlpC/P60 domain is found at 148–268 (HAFRENVVQT…DLATTITAIG (121 aa)). Cysteine 178 serves as the catalytic Nucleophile. Histidine 224 functions as the Proton acceptor in the catalytic mechanism. The active site involves histidine 236.

The protein belongs to the peptidase C40 family.

Its subcellular location is the cytoplasm. Its function is as follows. Involved in cell sporulation. Hydrolyzes gamma-D-Glu-L-(meso)A2pm linkages only in those peptide units that have a free N-terminal L-alanine. This is Dipeptidyl-peptidase 6 from Lysinibacillus sphaericus (Bacillus sphaericus).